The following is a 793-amino-acid chain: DnaJ homolog subfamily C member 10 (793 aa).

A signal peptide spans 1–32; sequence MGVWLNKDDFIRDLKRISLCLLILYVVVVVGT. The J domain occupies 35–100; that stretch reads NFYSLLGVSK…DLRKKYDKYG (66 aa). Positions 130–232 constitute a Thioredoxin 1 domain; that stretch reads EIITLERREF…ESLVAFAMQH (103 aa). Cys158 and Cys161 are oxidised to a cystine. Trxb regions lie at residues 235 to 350 and 348 to 463; these read STVT…LPDF and PDFE…PQNF. Thioredoxin domains follow at residues 454–553, 557–665, and 671–776; these read HVTT…IEDL, SVVS…SWGL, and ASID…ALIY. Cys480 and Cys483 form a disulfide bridge. Asn530 carries an N-linked (GlcNAc...) asparagine glycan. Intrachain disulfides connect Cys588-Cys591 and Cys700-Cys703. Residues 790–793 carry the Prevents secretion from ER motif; the sequence is KDEL.

As to quaternary structure, interacts with HSPA5 (via its J domain). Interacts with EDEM1. In terms of tissue distribution, ubiquitous. Particularly abundant in secretory tissues. Ubiquitous in fetal tissues and tumor tissues. Higher expression in fetal tissues than in adult tissues. Expressed in testis, pancreas, fetal thymus and fetal kidney. High expression in heart, liver, kidney, and testis. Low expression in spleen and skeletal muscle.

It is found in the endoplasmic reticulum lumen. Endoplasmic reticulum disulfide reductase involved both in the correct folding of proteins and degradation of misfolded proteins. Required for efficient folding of proteins in the endoplasmic reticulum by catalyzing the removal of non-native disulfide bonds formed during the folding of proteins, such as LDLR. Also involved in endoplasmic reticulum-associated degradation (ERAD) by reducing incorrect disulfide bonds in misfolded glycoproteins recognized by EDEM1. Interaction with HSPA5 is required its activity, not for the disulfide reductase activity, but to facilitate the release of DNAJC10 from its substrate. Promotes apoptotic signaling pathway in response to endoplasmic reticulum stress. This is DnaJ homolog subfamily C member 10 (Dnajc10) from Mus musculus (Mouse).